Reading from the N-terminus, the 503-residue chain is Probable cytosol aminopeptidase (503 aa).

Residues K270 and D275 each contribute to the Mn(2+) site. K282 is an active-site residue. Mn(2+) contacts are provided by D293, D352, and E354. Residue R356 is part of the active site.

The protein belongs to the peptidase M17 family. Mn(2+) is required as a cofactor.

The protein localises to the cytoplasm. The enzyme catalyses Release of an N-terminal amino acid, Xaa-|-Yaa-, in which Xaa is preferably Leu, but may be other amino acids including Pro although not Arg or Lys, and Yaa may be Pro. Amino acid amides and methyl esters are also readily hydrolyzed, but rates on arylamides are exceedingly low.. It carries out the reaction Release of an N-terminal amino acid, preferentially leucine, but not glutamic or aspartic acids.. In terms of biological role, presumably involved in the processing and regular turnover of intracellular proteins. Catalyzes the removal of unsubstituted N-terminal amino acids from various peptides. The polypeptide is Probable cytosol aminopeptidase (Escherichia fergusonii (strain ATCC 35469 / DSM 13698 / CCUG 18766 / IAM 14443 / JCM 21226 / LMG 7866 / NBRC 102419 / NCTC 12128 / CDC 0568-73)).